Here is a 115-residue protein sequence, read N- to C-terminus: Large ribosomal subunit protein uL24 (115 aa).

The protein belongs to the universal ribosomal protein uL24 family. In terms of assembly, part of the 50S ribosomal subunit.

In terms of biological role, one of two assembly initiator proteins, it binds directly to the 5'-end of the 23S rRNA, where it nucleates assembly of the 50S subunit. Its function is as follows. One of the proteins that surrounds the polypeptide exit tunnel on the outside of the subunit. This is Large ribosomal subunit protein uL24 from Beutenbergia cavernae (strain ATCC BAA-8 / DSM 12333 / CCUG 43141 / JCM 11478 / NBRC 16432 / NCIMB 13614 / HKI 0122).